The following is a 284-amino-acid chain: Protein pxr1 (284 aa).

The G-patch domain occupies 25–71; sequence TNRLGFKLLSSYGWVNGNGLGEKQHGRIHNIKVSLKDDTLGIGAKAT. Residues 149–253 are disordered; that stretch reads DEDRVCEDAS…KVKEGNRPAS (105 aa). Phosphoserine is present on residues S159 and S160. 2 stretches are compositionally biased toward basic residues: residues 166–181 and 196–206; these read EKRKKHSSKKKSKKKT and TKKKKKEHKKK. Composition is skewed to basic and acidic residues over residues 207–224 and 233–249; these read DKESSSKKRKSGSSDKEE and KDKPESTSSVEKVKEGN.

This sequence belongs to the PINX1 family.

The protein resides in the nucleus. The protein localises to the nucleolus. Its function is as follows. Involved in rRNA-processing at A0, A1 and A2 sites and negatively regulates telomerase. In Schizosaccharomyces pombe (strain 972 / ATCC 24843) (Fission yeast), this protein is Protein pxr1 (pxr1).